A 252-amino-acid polypeptide reads, in one-letter code: F-box/SPRY domain-containing protein 1 (252 aa).

In terms of domain architecture, F-box spans 1–48; the sequence is MVDPLCNYNVLEAIFSYLELSDLSRCSQVCKSWYHFLNDENSDVWRWH. Residues 58 to 250 form the B30.2/SPRY domain; that stretch reads IKSDLLASVT…VSMVYLGTPL (193 aa).

Belongs to the FBXO45/Fsn family. As to quaternary structure, component of an E3 ubiquitin ligase complex composed of hiw and Fsn.

Its subcellular location is the synapse. Its pathway is protein modification; protein ubiquitination. In terms of biological role, required in the presynaptic motoneuron to down-regulate the levels of wnd and restrain synaptic terminal growth at the neuromuscular junction (NMJ). The chain is F-box/SPRY domain-containing protein 1 from Drosophila mojavensis (Fruit fly).